The chain runs to 465 residues: Cysteine--tRNA ligase (465 aa).

Residue Cys-28 participates in Zn(2+) binding. The short motif at 30 to 40 (PTVYNYIHIGN) is the 'HIGH' region element. 3 residues coordinate Zn(2+): Cys-208, His-233, and Glu-237. Residues 265–269 (KMSKS) carry the 'KMSKS' region motif. Position 268 (Lys-268) interacts with ATP.

Belongs to the class-I aminoacyl-tRNA synthetase family. Monomer. It depends on Zn(2+) as a cofactor.

The protein resides in the cytoplasm. It catalyses the reaction tRNA(Cys) + L-cysteine + ATP = L-cysteinyl-tRNA(Cys) + AMP + diphosphate. In Exiguobacterium sibiricum (strain DSM 17290 / CCUG 55495 / CIP 109462 / JCM 13490 / 255-15), this protein is Cysteine--tRNA ligase.